The chain runs to 355 residues: MIETDKLTGADRLPDRVISATPASTQEEAFERALRPKLLDEYVGQEKVRGQLDIFMHAARKRREALDHVLLFGPPGLGKTTLAHIIAREMGVNLRQTSGPVLERPGDLAALLTNLEAHDVLFIDEIHRLSPVVEEILYPALEDYQIDIMIGEGPAARSVKLDLQPFTLVGATTRAGMLTNPLRDRFGIVARLEFYTPDELARIVARSALLLNAAIDPAGALEIARRARGTPRIANRLLRRVRDFAEVKSDGTITRELADAALEMLDVDSVGFDLMDRKLLEAVLHKFDGGPVGVDNLAAAIGEARDTIEDVLEPYMIQQGYLQRTPRGRMATAAAYRHFGLASPRDGGADLAEGL.

The interval 4–195 (TDKLTGADRL…FGIVARLEFY (192 aa)) is large ATPase domain (RuvB-L). Residues leucine 34, arginine 35, glycine 76, lysine 79, threonine 80, threonine 81, 142 to 144 (EDY), arginine 185, tyrosine 195, and arginine 232 each bind ATP. Residue threonine 80 participates in Mg(2+) binding. The tract at residues 196–266 (TPDELARIVA…LADAALEMLD (71 aa)) is small ATPAse domain (RuvB-S). Residues 269–355 (SVGFDLMDRK…DGGADLAEGL (87 aa)) are head domain (RuvB-H). The DNA site is built by arginine 305, arginine 324, and arginine 329.

This sequence belongs to the RuvB family. Homohexamer. Forms an RuvA(8)-RuvB(12)-Holliday junction (HJ) complex. HJ DNA is sandwiched between 2 RuvA tetramers; dsDNA enters through RuvA and exits via RuvB. An RuvB hexamer assembles on each DNA strand where it exits the tetramer. Each RuvB hexamer is contacted by two RuvA subunits (via domain III) on 2 adjacent RuvB subunits; this complex drives branch migration. In the full resolvosome a probable DNA-RuvA(4)-RuvB(12)-RuvC(2) complex forms which resolves the HJ.

The protein localises to the cytoplasm. The catalysed reaction is ATP + H2O = ADP + phosphate + H(+). Functionally, the RuvA-RuvB-RuvC complex processes Holliday junction (HJ) DNA during genetic recombination and DNA repair, while the RuvA-RuvB complex plays an important role in the rescue of blocked DNA replication forks via replication fork reversal (RFR). RuvA specifically binds to HJ cruciform DNA, conferring on it an open structure. The RuvB hexamer acts as an ATP-dependent pump, pulling dsDNA into and through the RuvAB complex. RuvB forms 2 homohexamers on either side of HJ DNA bound by 1 or 2 RuvA tetramers; 4 subunits per hexamer contact DNA at a time. Coordinated motions by a converter formed by DNA-disengaged RuvB subunits stimulates ATP hydrolysis and nucleotide exchange. Immobilization of the converter enables RuvB to convert the ATP-contained energy into a lever motion, pulling 2 nucleotides of DNA out of the RuvA tetramer per ATP hydrolyzed, thus driving DNA branch migration. The RuvB motors rotate together with the DNA substrate, which together with the progressing nucleotide cycle form the mechanistic basis for DNA recombination by continuous HJ branch migration. Branch migration allows RuvC to scan DNA until it finds its consensus sequence, where it cleaves and resolves cruciform DNA. The chain is Holliday junction branch migration complex subunit RuvB from Cupriavidus metallidurans (strain ATCC 43123 / DSM 2839 / NBRC 102507 / CH34) (Ralstonia metallidurans).